The following is a 330-amino-acid chain: Aspartate--ammonia ligase (330 aa).

The protein belongs to the class-II aminoacyl-tRNA synthetase family. AsnA subfamily.

It localises to the cytoplasm. It catalyses the reaction L-aspartate + NH4(+) + ATP = L-asparagine + AMP + diphosphate + H(+). Its pathway is amino-acid biosynthesis; L-asparagine biosynthesis; L-asparagine from L-aspartate (ammonia route): step 1/1. This Edwardsiella ictaluri (strain 93-146) protein is Aspartate--ammonia ligase.